Reading from the N-terminus, the 1527-residue chain is uncharacterized protein (1527 aa).

Coiled-coil stretches lie at residues Asn-262–Glu-293, Gln-699–Leu-751, Asn-905–Ile-932, and Lys-1217–Ser-1255. The segment at Thr-683–Gln-734 is disordered. A compositionally biased stretch (low complexity) spans Gln-700–Asp-728.

This is an uncharacterized protein from Dictyostelium discoideum (Social amoeba).